A 217-amino-acid chain; its full sequence is Proteasome subunit beta type-9 (217 aa).

Positions 1–18 (MLGEEAEPQWISEEVKTG) are cleaved as a propeptide — removed in mature form. Thr19 functions as the Nucleophile in the catalytic mechanism.

Belongs to the peptidase T1B family. As to quaternary structure, the 26S proteasome consists of a 20S proteasome core and two 19S regulatory subunits. The 20S proteasome core is composed of 28 subunits that are arranged in four stacked rings, resulting in a barrel-shaped structure. The two end rings are each formed by seven alpha subunits, and the two central rings are each formed by seven beta subunits. The catalytic chamber with the active sites is on the inside of the barrel. Component of the immunoproteasome, where it displaces the equivalent housekeeping subunit PSMB6. In terms of processing, autocleaved. The resulting N-terminal Thr residue of the mature subunit is responsible for the nucleophile proteolytic activity.

It localises to the cytoplasm. It is found in the nucleus. The enzyme catalyses Cleavage of peptide bonds with very broad specificity.. Its function is as follows. The proteasome is a multicatalytic proteinase complex which is characterized by its ability to cleave peptides with Arg, Phe, Tyr, Leu, and Glu adjacent to the leaving group at neutral or slightly basic pH. The proteasome has an ATP-dependent proteolytic activity. This subunit is involved in antigen processing to generate class I binding peptides. This is Proteasome subunit beta type-9 (psmb9) from Oryzias latipes (Japanese rice fish).